A 140-amino-acid polypeptide reads, in one-letter code: Natriuretic peptides A (140 aa).

The first 24 residues, 1-24 (MDTRGSFSCGFLLLLLIQLQPSRA), serve as a signal peptide directing secretion. Residues 25 to 111 (NPIYNLSPAK…KRLRGVQMPR (87 aa)) constitute a propeptide that is removed on maturation. The tract at residues 55-94 (ALESNPDLQEPQTQEEIPPELTDDSDEQKAEPKLASNTPL) is disordered. The span at 71-80 (IPPELTDDSD) shows a compositional bias: acidic residues. A disulfide bond links C118 and C134.

The protein belongs to the natriuretic peptide family. In terms of processing, cleaved by CORIN upon secretion to produce the functional hormone.

The protein resides in the secreted. Its function is as follows. Hormone playing a key role in cardiovascular homeostasis through regulation of natriuresis, diuresis, and vasodilation. Specifically binds and stimulates the cGMP production of the NPR1 receptor. Binds the clearance receptor NPR3. The sequence is that of Natriuretic peptides A (NPPA) from Gallus gallus (Chicken).